Consider the following 110-residue polypeptide: Large ribosomal subunit protein uL22 (110 aa).

This sequence belongs to the universal ribosomal protein uL22 family. In terms of assembly, part of the 50S ribosomal subunit.

Functionally, this protein binds specifically to 23S rRNA; its binding is stimulated by other ribosomal proteins, e.g. L4, L17, and L20. It is important during the early stages of 50S assembly. It makes multiple contacts with different domains of the 23S rRNA in the assembled 50S subunit and ribosome. Its function is as follows. The globular domain of the protein is located near the polypeptide exit tunnel on the outside of the subunit, while an extended beta-hairpin is found that lines the wall of the exit tunnel in the center of the 70S ribosome. The chain is Large ribosomal subunit protein uL22 from Mycoplasmopsis pulmonis (strain UAB CTIP) (Mycoplasma pulmonis).